The sequence spans 173 residues: Crossover junction endodeoxyribonuclease RuvC (173 aa).

Catalysis depends on residues Asp-8, Glu-67, and Asp-139. Mg(2+) is bound by residues Asp-8, Glu-67, and Asp-139.

Belongs to the RuvC family. In terms of assembly, homodimer which binds Holliday junction (HJ) DNA. The HJ becomes 2-fold symmetrical on binding to RuvC with unstacked arms; it has a different conformation from HJ DNA in complex with RuvA. In the full resolvosome a probable DNA-RuvA(4)-RuvB(12)-RuvC(2) complex forms which resolves the HJ. The cofactor is Mg(2+).

Its subcellular location is the cytoplasm. It catalyses the reaction Endonucleolytic cleavage at a junction such as a reciprocal single-stranded crossover between two homologous DNA duplexes (Holliday junction).. The RuvA-RuvB-RuvC complex processes Holliday junction (HJ) DNA during genetic recombination and DNA repair. Endonuclease that resolves HJ intermediates. Cleaves cruciform DNA by making single-stranded nicks across the HJ at symmetrical positions within the homologous arms, yielding a 5'-phosphate and a 3'-hydroxyl group; requires a central core of homology in the junction. The consensus cleavage sequence is 5'-(A/T)TT(C/G)-3'. Cleavage occurs on the 3'-side of the TT dinucleotide at the point of strand exchange. HJ branch migration catalyzed by RuvA-RuvB allows RuvC to scan DNA until it finds its consensus sequence, where it cleaves and resolves the cruciform DNA. This Sodalis glossinidius (strain morsitans) protein is Crossover junction endodeoxyribonuclease RuvC.